Here is a 292-residue protein sequence, read N- to C-terminus: (S)-phenoxypropionate/alpha-ketoglutarate-dioxygenase (292 aa).

Fe cation-binding residues include H108 and D110. T135 and W247 together coordinate 2-oxoglutarate. H262 contacts Fe cation. R273 is a 2-oxoglutarate binding site.

Belongs to the TfdA dioxygenase family. Monomer. It depends on Fe cation as a cofactor. L-ascorbate serves as cofactor.

The enzyme catalyses (S)-2-(4-chloro-2-methylphenoxy)propanoate + 2-oxoglutarate + O2 = 2-methyl-4-chlorophenol + pyruvate + succinate + CO2. It catalyses the reaction (S)-(2,4-dichlorophenoxy)propanoate + 2-oxoglutarate + O2 = 2,4-dichlorophenol + pyruvate + succinate + CO2. It participates in xenobiotic degradation; 2-(2,4-dichlorophenoxy)propanoate degradation. With respect to regulation, inhibited by divalent cations, most significantly by copper and nickel, and by diethylpyrocarbonate (DEPC). Involved in the degradation of the phenoxypropionate herbicides. Catalyzes the enantiospecific cleavage of the ether bond in the herbicid S-dichlorprop ((S)-2-(2,4-dichlorophenoxy)propionate)(S-2,4-DP) and S-mecoprop ((S)-2-(4-chloro-2-methylphenoxy)propionate)(S-2,4-MCPP). It can also accept (RS)-2-(4-chlorophenoxy)propionate, (RS)-2-(m-chlorophenoxy)propionate and phenoxyacetate derivatives such as 2,4-dichlorophenoxyacetate (2,4-D), however it can only accept 2-oxoglutarate as oxygen acceptor. This chain is (S)-phenoxypropionate/alpha-ketoglutarate-dioxygenase, found in Delftia acidovorans (Pseudomonas acidovorans).